The sequence spans 294 residues: 2-dehydropantoate 2-reductase (294 aa).

NADP(+)-binding positions include 10–15 (GAGALG), R34, K74, N98, and A122. K178 serves as the catalytic Proton donor. Residues K178, N182, N186, N196, and 243 to 246 (NRSS) each bind substrate. E258 provides a ligand contact to NADP(+).

This sequence belongs to the ketopantoate reductase family.

The protein localises to the cytoplasm. The catalysed reaction is (R)-pantoate + NAD(+) = 2-dehydropantoate + NADH + H(+). It catalyses the reaction (R)-pantoate + NADP(+) = 2-dehydropantoate + NADPH + H(+). The protein operates within cofactor biosynthesis; coenzyme A biosynthesis. Its function is as follows. Catalyzes the NAD(P)H-dependent reduction of ketopantoate into pantoic acid. The chain is 2-dehydropantoate 2-reductase from Archaeoglobus fulgidus (strain ATCC 49558 / DSM 4304 / JCM 9628 / NBRC 100126 / VC-16).